We begin with the raw amino-acid sequence, 143 residues long: 3-dehydroquinate dehydratase (143 aa).

Tyr-23 serves as the catalytic Proton acceptor. Asn-74, His-80, and Asp-87 together coordinate substrate. The active-site Proton donor is His-100. Substrate is bound by residues 101–102 and Arg-111; that span reads IS.

Belongs to the type-II 3-dehydroquinase family. As to quaternary structure, homododecamer.

It carries out the reaction 3-dehydroquinate = 3-dehydroshikimate + H2O. Its pathway is metabolic intermediate biosynthesis; chorismate biosynthesis; chorismate from D-erythrose 4-phosphate and phosphoenolpyruvate: step 3/7. Catalyzes a trans-dehydration via an enolate intermediate. In Endomicrobium trichonymphae, this protein is 3-dehydroquinate dehydratase.